The primary structure comprises 256 residues: Ubiquinone/menaquinone biosynthesis C-methyltransferase UbiE (256 aa).

The segment covering 1 to 12 (MNDQRKGEHAEP) has biased composition (basic and acidic residues). The segment at 1–21 (MNDQRKGEHAEPTTHFGYQDV) is disordered. Residues Thr-79, Asp-100, and 128–129 (DA) contribute to the S-adenosyl-L-methionine site.

Belongs to the class I-like SAM-binding methyltransferase superfamily. MenG/UbiE family.

It catalyses the reaction a 2-demethylmenaquinol + S-adenosyl-L-methionine = a menaquinol + S-adenosyl-L-homocysteine + H(+). The enzyme catalyses a 2-methoxy-6-(all-trans-polyprenyl)benzene-1,4-diol + S-adenosyl-L-methionine = a 5-methoxy-2-methyl-3-(all-trans-polyprenyl)benzene-1,4-diol + S-adenosyl-L-homocysteine + H(+). The protein operates within quinol/quinone metabolism; menaquinone biosynthesis; menaquinol from 1,4-dihydroxy-2-naphthoate: step 2/2. It participates in cofactor biosynthesis; ubiquinone biosynthesis. Methyltransferase required for the conversion of demethylmenaquinol (DMKH2) to menaquinol (MKH2) and the conversion of 2-polyprenyl-6-methoxy-1,4-benzoquinol (DDMQH2) to 2-polyprenyl-3-methyl-6-methoxy-1,4-benzoquinol (DMQH2). This Pseudomonas putida (strain W619) protein is Ubiquinone/menaquinone biosynthesis C-methyltransferase UbiE.